The sequence spans 203 residues: Cold-regulated 413 plasma membrane protein 2 (203 aa).

At Met1–Gly43 the chain is on the extracellular side. The chain crosses the membrane as a helical span at residues Leu44–Ile64. The Cytoplasmic segment spans residues Leu65–Met74. The helical transmembrane segment at Leu75–Leu95 threads the bilayer. The Extracellular portion of the chain corresponds to Ser96–Asp98. Residues Val99 to Pro119 form a helical membrane-spanning segment. Position 120 (Asp120) is a topological domain, cytoplasmic. The helical transmembrane segment at Trp121–His141 threads the bilayer. Over His142–Arg144 the chain is Extracellular. Residues Gly145–Ile165 traverse the membrane as a helical segment. Over Arg166–Arg179 the chain is Cytoplasmic. The chain crosses the membrane as a helical span at residues Gly180–Val200. The Extracellular segment spans residues Arg201–Met203.

This sequence belongs to the Cold-regulated 413 protein family.

Its subcellular location is the cell membrane. The protein is Cold-regulated 413 plasma membrane protein 2 (COR413PM2) of Arabidopsis thaliana (Mouse-ear cress).